A 1124-amino-acid chain; its full sequence is Transient-receptor-potential-like protein (1124 aa).

Positions 1-24 (MGRKKKLPTGVSSGVSHASSAPKS) are disordered. At 1–340 (MGRKKKLPTG…GFRRKSIVDK (340 aa)) the chain is on the cytoplasmic side. Residues 10-21 (GVSSGVSHASSA) are compositionally biased toward low complexity. ANK repeat units follow at residues 40–69 (LEEK…RHQH), 78–107 (LGRR…ETKD), and 152–181 (PDIT…AVPV). The helical transmembrane segment at 341–361 (VICIAQVAVLFPLYCLIYMCA) threads the bilayer. At 362–373 (PNCRTGQLMRKP) the chain is on the extracellular side. A helical membrane pass occupies residues 374–394 (FMKFLIHASSYLFFLFILILV). At 395 to 431 (SQRADDDFVRIFGTTRMKKELAEQELRQRGQTPSKLE) the chain is on the cytoplasmic side. The helical transmembrane segment at 432–452 (LIVVMYVIGFVWEEVQEIFAV) threads the bilayer. Residues 453-512 (GMKSYLRNMWNFIDFLRNSLYVSVMCLRAFAYIQQATEIARDPQMAYIPREKWHDFDPQL) lie on the Extracellular side of the membrane. Residues 513–533 (IAEGLFAAANVFSALKLVHLF) form a helical membrane-spanning segment. Over 534–548 (SINPHLGPLQISLGR) the chain is Cytoplasmic. Residues 549–569 (MVIDIVKFFFIYTLVLFAFAC) traverse the membrane as a helical segment. Residues 570 to 645 (GLNQLLWYFA…GIKSYTRFWG (76 aa)) are Extracellular-facing. The chain crosses the membrane as a helical span at residues 646 to 666 (LLMFGSYSVINVIVLLNLLIA). Over 667 to 1124 (MMSNSYAMID…TSPQRPKHRN (458 aa)) the chain is Cytoplasmic. 2 calmodulin-binding regions span residues 710–728 (SVKW…IDRQ) and 853–895 (IPSK…SQIG). Disordered regions lie at residues 978 to 1013 (RAMA…GVSH) and 1031 to 1124 (LIAN…KHRN). Low complexity predominate over residues 1035–1063 (SAPSAPTAPPKKSAPTAPTPTYKPTTHAP). 2 stretches are compositionally biased toward basic and acidic residues: residues 1069 to 1081 (GNRE…DGVR) and 1090 to 1106 (HVVD…RDNV). Polar residues predominate over residues 1107-1118 (SDISSIASTSPQ).

It belongs to the transient receptor (TC 1.A.4) family. STrpC subfamily. As to quaternary structure, forms heteromultimers with Trpgamma and, to a lower extent, with trp. Interacts with Fkbp59 in vivo and is found in the inaD signaling complex. Expressed predominantly in the rhabdomeres of photoreceptor cells.

The protein localises to the membrane. It is found in the cell projection. It localises to the rhabdomere membrane. Its function is as follows. A light-sensitive calcium channel that is required for inositide-mediated Ca(2+) entry in the retina during phospholipase C (PLC)-mediated phototransduction. Required for vision in the dark and in dim light. Binds calmodulin. Trp and trpl act together in the light response, although it is unclear whether as heteromultimers or distinct units. Also forms a functional cation channel with Trpgamma. Activated by fatty acids, metabolic stress, inositols and GTP-binding proteins. This chain is Transient-receptor-potential-like protein (trpl), found in Drosophila melanogaster (Fruit fly).